The primary structure comprises 65 residues: Large ribosomal subunit protein bL35 (65 aa).

The segment at 1–26 (MPKMKTNRASAKRFKKTASGGFKAGQ) is disordered.

Belongs to the bacterial ribosomal protein bL35 family.

The polypeptide is Large ribosomal subunit protein bL35 (Oenococcus oeni (strain ATCC BAA-331 / PSU-1)).